An 87-amino-acid chain; its full sequence is UPF0250 protein ETA_23570 (87 aa).

It belongs to the UPF0250 family.

The protein is UPF0250 protein ETA_23570 of Erwinia tasmaniensis (strain DSM 17950 / CFBP 7177 / CIP 109463 / NCPPB 4357 / Et1/99).